The primary structure comprises 517 residues: Glutamate--tRNA ligase (517 aa).

The short motif at 14–24 (PSPTGPLHIGG) is the 'HIGH' region element. A 'KMSKS' region motif is present at residues 266-270 (KLSKR). Lysine 269 contributes to the ATP binding site.

This sequence belongs to the class-I aminoacyl-tRNA synthetase family. Glutamate--tRNA ligase type 1 subfamily. In terms of assembly, monomer.

Its subcellular location is the cytoplasm. The enzyme catalyses tRNA(Glu) + L-glutamate + ATP = L-glutamyl-tRNA(Glu) + AMP + diphosphate. Functionally, catalyzes the attachment of glutamate to tRNA(Glu) in a two-step reaction: glutamate is first activated by ATP to form Glu-AMP and then transferred to the acceptor end of tRNA(Glu). In Cytophaga hutchinsonii (strain ATCC 33406 / DSM 1761 / CIP 103989 / NBRC 15051 / NCIMB 9469 / D465), this protein is Glutamate--tRNA ligase.